The sequence spans 250 residues: Triosephosphate isomerase (250 aa).

9–11 (NWK) provides a ligand contact to substrate. The Electrophile role is filled by His-94. The active-site Proton acceptor is Glu-166. Residues Gly-172, Ser-212, and 233-234 (GG) contribute to the substrate site.

The protein belongs to the triosephosphate isomerase family. In terms of assembly, homodimer.

The protein resides in the cytoplasm. The catalysed reaction is D-glyceraldehyde 3-phosphate = dihydroxyacetone phosphate. The protein operates within carbohydrate biosynthesis; gluconeogenesis. It functions in the pathway carbohydrate degradation; glycolysis; D-glyceraldehyde 3-phosphate from glycerone phosphate: step 1/1. Involved in the gluconeogenesis. Catalyzes stereospecifically the conversion of dihydroxyacetone phosphate (DHAP) to D-glyceraldehyde-3-phosphate (G3P). This Thermus thermophilus (strain ATCC 27634 / DSM 579 / HB8) protein is Triosephosphate isomerase.